A 301-amino-acid chain; its full sequence is Ribosomal protein L11 methyltransferase (301 aa).

4 residues coordinate S-adenosyl-L-methionine: T146, G167, D189, and N234.

It belongs to the methyltransferase superfamily. PrmA family.

It localises to the cytoplasm. It catalyses the reaction L-lysyl-[protein] + 3 S-adenosyl-L-methionine = N(6),N(6),N(6)-trimethyl-L-lysyl-[protein] + 3 S-adenosyl-L-homocysteine + 3 H(+). In terms of biological role, methylates ribosomal protein L11. The protein is Ribosomal protein L11 methyltransferase of Acinetobacter baumannii (strain AB307-0294).